Reading from the N-terminus, the 173-residue chain is Photosystem I assembly protein Ycf3 (173 aa).

3 TPR repeats span residues 35–68, 72–105, and 120–153; these read AFAY…EEDP, SYTF…NPKM, and GEQA…APDN.

It belongs to the Ycf3 family.

The protein resides in the plastid. It is found in the cyanelle thylakoid membrane. Essential for the assembly of the photosystem I (PSI) complex. May act as a chaperone-like factor to guide the assembly of the PSI subunits. The chain is Photosystem I assembly protein Ycf3 from Cyanophora paradoxa.